We begin with the raw amino-acid sequence, 189 residues long: Mediator of RNA polymerase II transcription subunit 30 (189 aa).

Residues 138–178 (SPESEDEIEKLEEQALSLRMEIAKKNVHVKELIDKLRELIA) are a coiled coil.

The protein belongs to the plant Mediator complex subunit 30 family. In terms of assembly, component of the Mediator complex.

The protein resides in the nucleus. In terms of biological role, component of the Mediator complex, a coactivator involved in the regulated transcription of nearly all RNA polymerase II-dependent genes. Mediator functions as a bridge to convey information from gene-specific regulatory proteins to the basal RNA polymerase II transcription machinery. The Mediator complex, having a compact conformation in its free form, is recruited to promoters by direct interactions with regulatory proteins and serves for the assembly of a functional preinitiation complex with RNA polymerase II and the general transcription factors. This is Mediator of RNA polymerase II transcription subunit 30 (MED30) from Arabidopsis thaliana (Mouse-ear cress).